A 94-amino-acid chain; its full sequence is CRISPR-associated endoribonuclease Cas2 (94 aa).

Aspartate 11 provides a ligand contact to Mg(2+).

It belongs to the CRISPR-associated endoribonuclease Cas2 protein family. In terms of assembly, homodimer, forms a heterotetramer with a Cas1 homodimer. It depends on Mg(2+) as a cofactor.

Its function is as follows. CRISPR (clustered regularly interspaced short palindromic repeat), is an adaptive immune system that provides protection against mobile genetic elements (viruses, transposable elements and conjugative plasmids). CRISPR clusters contain sequences complementary to antecedent mobile elements and target invading nucleic acids. CRISPR clusters are transcribed and processed into CRISPR RNA (crRNA). Functions as a ssRNA-specific endoribonuclease. Involved in the integration of spacer DNA into the CRISPR cassette. This Thermus thermophilus (strain ATCC 27634 / DSM 579 / HB8) protein is CRISPR-associated endoribonuclease Cas2.